The sequence spans 513 residues: Maturase K (513 aa).

This sequence belongs to the intron maturase 2 family. MatK subfamily.

It localises to the plastid. Its subcellular location is the chloroplast. Its function is as follows. Usually encoded in the trnK tRNA gene intron. Probably assists in splicing its own and other chloroplast group II introns. The polypeptide is Maturase K (Keckiella cordifolia (Heart-leafed penstemon)).